The following is a 147-amino-acid chain: Endoribonuclease YbeY (147 aa).

Zn(2+)-binding residues include His-109, His-113, and His-119.

It belongs to the endoribonuclease YbeY family. Zn(2+) serves as cofactor.

The protein localises to the cytoplasm. In terms of biological role, single strand-specific metallo-endoribonuclease involved in late-stage 70S ribosome quality control and in maturation of the 3' terminus of the 16S rRNA. This chain is Endoribonuclease YbeY, found in Magnetococcus marinus (strain ATCC BAA-1437 / JCM 17883 / MC-1).